Consider the following 565-residue polypeptide: Carboxylesterase 1D (565 aa).

Residues 1–18 (MRLYPLVWLFLAACTAWG) form the signal peptide. Asn79 is a glycosylation site (N-linked (GlcNAc...) asparagine). An intrachain disulfide couples Cys87 to Cys116. Residue Ser221 is the Acyl-ester intermediate of the active site. Residues Cys273 and Cys284 are joined by a disulfide bond. Residue Glu353 is the Charge relay system of the active site. Position 382 is an N6-succinyllysine (Lys382). His466 functions as the Charge relay system in the catalytic mechanism. Asn489 carries an N-linked (GlcNAc...) asparagine glycan. The Prevents secretion from ER signature appears at 562–565 (HVEL).

It belongs to the type-B carboxylesterase/lipase family. Homotrimer. In terms of tissue distribution, detected in liver, lung and testis, but not in kidney (at protein level).

Its subcellular location is the endoplasmic reticulum lumen. It localises to the cytoplasm. The protein localises to the cytosol. The protein resides in the lipid droplet. It is found in the microsome. The enzyme catalyses all-trans-retinyl hexadecanoate + H2O = all-trans-retinol + hexadecanoate + H(+). The catalysed reaction is a carboxylic ester + H2O = an alcohol + a carboxylate + H(+). It catalyses the reaction a long-chain fatty acyl ethyl ester + H2O = a long-chain fatty acid + ethanol + H(+). With respect to regulation, FAEE-synthesizing and PNPB-hydrolyzing activities are both inhibited by DFP. Major lipase in white adipose tissue. Involved in the metabolism of xenobiotics and of natural substrates. Hydrolyzes triacylglycerols and monoacylglycerols, with a preference for monoacylglycerols. The susceptibility of the substrate increases with decreasing acyl chain length of the fatty acid moiety. Catalyzes the synthesis of fatty acid ethyl esters. Hydrolyzes retinyl esters. The chain is Carboxylesterase 1D from Rattus norvegicus (Rat).